Here is a 405-residue protein sequence, read N- to C-terminus: Argininosuccinate synthase (405 aa).

ATP is bound by residues 10-18 (AYSGGLDTS) and A37. Residues Y88 and S93 each coordinate L-citrulline. G118 contacts ATP. L-aspartate-binding residues include T120, N124, and D125. L-citrulline is bound at residue N124. Residues R128, S179, S188, E264, and Y276 each coordinate L-citrulline.

This sequence belongs to the argininosuccinate synthase family. Type 1 subfamily. In terms of assembly, homotetramer.

The protein resides in the cytoplasm. It carries out the reaction L-citrulline + L-aspartate + ATP = 2-(N(omega)-L-arginino)succinate + AMP + diphosphate + H(+). It participates in amino-acid biosynthesis; L-arginine biosynthesis; L-arginine from L-ornithine and carbamoyl phosphate: step 2/3. This chain is Argininosuccinate synthase, found in Pseudomonas putida (strain GB-1).